We begin with the raw amino-acid sequence, 32 residues long: Natriuretic peptide Coa_NP2 (32 aa).

Residues Cys8 and Cys24 are joined by a disulfide bond.

Belongs to the natriuretic peptide family. Snake NP subfamily. As to expression, expressed by the venom gland.

Its subcellular location is the secreted. Snake venom natriuretic peptide that exhibits hypotensive and vasorelaxant effects. Produces a dose-dependent hypotension in rats, followed by significant increases in concentrations of markers of nitric oxide (NO) formation measured in the plasma and vasorelaxation in a thoracic aortic ring bath. The peptide may exert its hypotensive action, at least in part, through stimulation of NO production. The vasorelaxant effect is endothelium-dependent and does not appear to be mediated by the natriuretic peptide receptor-A, as its action is not modified by isatin (a potent NPR1 antagonist). May act by activating the natriuretic peptide receptor-B (NPR2). The sequence is that of Natriuretic peptide Coa_NP2 from Crotalus lutosus abyssus (Grand Canyon rattlesnake).